The following is a 334-amino-acid chain: HTH-type transcriptional repressor PurR (334 aa).

Positions 2 to 56 constitute an HTH lacI-type domain; that stretch reads ATIKDVARLAGVSTTTVSHVINKTRFVAETTQEKVMKAVDELNYAPSAVARSLKC. Positions 4–23 form a DNA-binding region, H-T-H motif; the sequence is IKDVARLAGVSTTTVSHVIN. Residues 48–56 mediate DNA binding; the sequence is SAVARSLKC. F73, K189, F220, and D274 together coordinate hypoxanthine.

In terms of assembly, homodimer.

Its pathway is purine metabolism; purine nucleotide biosynthesis [regulation]. In terms of biological role, is the main repressor of the genes involved in the de novo synthesis of purine nucleotides, regulating purB, purC, purEK, purF, purHD, purL, purMN and guaBA expression. PurR is allosterically activated to bind its cognate DNA by binding the purine corepressors, hypoxanthine or guanine, thereby effecting transcription repression. This chain is HTH-type transcriptional repressor PurR, found in Vibrio campbellii (strain ATCC BAA-1116).